Reading from the N-terminus, the 189-residue chain is MQRLWVTGYRSYELNVFGDKDPKIIIIKYALKNYFKGLLENDQLDWIITGANLGVEQWTAEVGLELGQKYPLRTSIMIPYEKFADRWNENNQTKFLNLKERVDFFASTSNLPYQNPVQLRNYQNFMLQHTDRALMVYDTEHPGKSKYDYNLIQKYQKAEEYPLDLIDFYDLQDVAEEYQEAHQRNYFSE.

The protein belongs to the UPF0398 family.

The sequence is that of UPF0398 protein lhv_1265 from Lactobacillus helveticus (strain DPC 4571).